The primary structure comprises 209 residues: Leucyl/phenylalanyl-tRNA--protein transferase (209 aa).

Belongs to the L/F-transferase family.

It is found in the cytoplasm. The catalysed reaction is N-terminal L-lysyl-[protein] + L-leucyl-tRNA(Leu) = N-terminal L-leucyl-L-lysyl-[protein] + tRNA(Leu) + H(+). It catalyses the reaction N-terminal L-arginyl-[protein] + L-leucyl-tRNA(Leu) = N-terminal L-leucyl-L-arginyl-[protein] + tRNA(Leu) + H(+). The enzyme catalyses L-phenylalanyl-tRNA(Phe) + an N-terminal L-alpha-aminoacyl-[protein] = an N-terminal L-phenylalanyl-L-alpha-aminoacyl-[protein] + tRNA(Phe). In terms of biological role, functions in the N-end rule pathway of protein degradation where it conjugates Leu, Phe and, less efficiently, Met from aminoacyl-tRNAs to the N-termini of proteins containing an N-terminal arginine or lysine. The chain is Leucyl/phenylalanyl-tRNA--protein transferase from Paramagnetospirillum magneticum (strain ATCC 700264 / AMB-1) (Magnetospirillum magneticum).